Reading from the N-terminus, the 130-residue chain is Small ribosomal subunit protein uS8 (130 aa).

It belongs to the universal ribosomal protein uS8 family. As to quaternary structure, part of the 30S ribosomal subunit. Contacts proteins S5 and S12.

Its function is as follows. One of the primary rRNA binding proteins, it binds directly to 16S rRNA central domain where it helps coordinate assembly of the platform of the 30S subunit. The protein is Small ribosomal subunit protein uS8 of Enterobacter sp. (strain 638).